Reading from the N-terminus, the 121-residue chain is Transposase InsC for insertion element IS2A (121 aa).

Belongs to the transposase 8 family.

In terms of biological role, involved in the transposition of the insertion sequence IS2. The polypeptide is Transposase InsC for insertion element IS2A (insC1) (Escherichia coli (strain K12)).